A 77-amino-acid polypeptide reads, in one-letter code: Small ribosomal subunit protein bS18 (77 aa).

Belongs to the bacterial ribosomal protein bS18 family. Part of the 30S ribosomal subunit. Forms a tight heterodimer with protein bS6.

In terms of biological role, binds as a heterodimer with protein bS6 to the central domain of the 16S rRNA, where it helps stabilize the platform of the 30S subunit. In Halalkalibacterium halodurans (strain ATCC BAA-125 / DSM 18197 / FERM 7344 / JCM 9153 / C-125) (Bacillus halodurans), this protein is Small ribosomal subunit protein bS18.